Consider the following 705-residue polypeptide: Dolichyl-diphosphooligosaccharide--protein glycosyltransferase subunit STT3A (705 aa).

The Cytoplasmic portion of the chain corresponds to 1–15 (MTKLGFLRLSYEKQD). A helical membrane pass occupies residues 16–34 (TLLKLLILSMAAVLSFSTR). The Lumenal segment spans residues 35–111 (LFAVLRFESV…VLHFFHITID (77 aa)). A DXD motif 1 motif is present at residues 47–49 (EFD). Asp-49 lines the Mn(2+) pocket. Residues 112 to 141 (IRNVCVFLAPLFSSFTTIVTYHLTKELKDA) traverse the membrane as a helical segment. A topological domain (cytoplasmic) is located at residue Gly-142. Residues 143–158 (AGLLAAAMIAVVPGYI) traverse the membrane as a helical segment. Residues 159 to 170 (SRSVAGSYDNEG) lie on the Lumenal side of the membrane. Mn(2+) is bound by residues Asp-167 and Glu-169. The DXD motif 2 signature appears at 167–169 (DNE). A helical membrane pass occupies residues 171–188 (IAIFCMLLTYYMWIKAVK). Residues 189–191 (TGS) lie on the Cytoplasmic side of the membrane. The chain crosses the membrane as a helical span at residues 192 to 207 (IYWAAKCALAYFYMVS). Over 208 to 210 (SWG) the chain is Lumenal. Residues 211-229 (GYVFLINLIPLHVLVLMLT) traverse the membrane as a helical segment. Over 230–234 (GRFSH) the chain is Cytoplasmic. Residues 235-253 (RIYVAYCTVYCLGTILSMQ) form a helical membrane-spanning segment. Over 254-265 (ISFVGFQPVLSS) the chain is Lumenal. A helical membrane pass occupies residues 266–283 (EHMAAFGVFGLCQIHAFV). Residues 284 to 298 (DYLRSKLNPQQFEVL) are Cytoplasmic-facing. The chain crosses the membrane as a helical span at residues 299-317 (FRSVISLVGFVLLTVGALL). Over 318 to 356 (MLTGKISPWTGRFYSLLDPSYAKNNIPIIASVSEHQPTT) the chain is Lumenal. Residues 348–351 (SVSE) carry the SVSE motif motif. Residues 357–379 (WSSYYFDLQLLVFMFPVGLYYCF) form a helical membrane-spanning segment. Over 380 to 385 (SNLSDA) the chain is Cytoplasmic. The helical transmembrane segment at 386–402 (RIFIIMYGVTSMYFSAV) threads the bilayer. Over 403 to 406 (MVRL) the chain is Lumenal. Arg-405 is a dolichyl diphosphooligosaccharide binding site. The chain crosses the membrane as a helical span at residues 407–428 (MLVLAPVMCILSGIGVSQVLST). Over 429-453 (YMKNLDISRPDKKSKKQQDSTYPIK) the chain is Cytoplasmic. The chain crosses the membrane as a helical span at residues 454–473 (NEVASGMILVMAFFLITYTF). Over 474-705 (HSTWVTSEAY…DLDNRGLSRT (232 aa)) the chain is Lumenal. Residues 525–527 (WWD) form an interacts with target acceptor peptide in protein substrate region. Positions 525–529 (WWDYG) match the WWDYG motif motif. Tyr-530 is a dolichyl diphosphooligosaccharide binding site. Residues Asn-537 and Asn-544 are each glycosylated (N-linked (GlcNAc...) asparagine). A glycan (N-linked (GlcNAc...) (high mannose) asparagine) is linked at Asn-548. A DK motif motif is present at residues 592–599 (DINKFLWM).

The protein belongs to the STT3 family. Component of the oligosaccharyltransferase (OST) complex. There are 2 OST complexes, OST-A and OST-B, which contain STT3A or STT3B as catalytic subunit, respectively. OST-A and OST-B contain common core subunits RPN1, RPN2, OST48, OST4, DAD1 and TMEM258, and OST-A contains DC2/OSTC and KRTCAP2/KCP2 specific accessory subunits. OST-A complex assembly occurs through the formation of 3 subcomplexes. Subcomplex 1 contains RPN1 and TMEM258, subcomplex 2 contains the OST-A-specific subunits STT3A, DC2/OSTC, and KCP2 as well as the core subunit OST4, and subcomplex 3 contains RPN2, DAD1, and OST48. The OST-A complex can form stable complexes with the Sec61 complex or with both the Sec61 and TRAP complexes. Requires Mg(2+) as cofactor. Mn(2+) is required as a cofactor.

Its subcellular location is the endoplasmic reticulum membrane. The catalysed reaction is a di-trans,poly-cis-dolichyl diphosphooligosaccharide + L-asparaginyl-[protein] = N(4)-(oligosaccharide-(1-&gt;4)-N-acetyl-beta-D-glucosaminyl-(1-&gt;4)-N-acetyl-beta-D-glucosaminyl)-L-asparaginyl-[protein] + a di-trans,poly-cis-dolichyl diphosphate + H(+). Its pathway is protein modification; protein glycosylation. In terms of biological role, catalytic subunit of the oligosaccharyl transferase (OST) complex that catalyzes the initial transfer of a defined glycan (Glc(3)Man(9)GlcNAc(2) in eukaryotes) from the lipid carrier dolichol-pyrophosphate to an asparagine residue within an Asn-X-Ser/Thr consensus motif in nascent polypeptide chains, the first step in protein N-glycosylation. N-glycosylation occurs cotranslationally and the complex associates with the Sec61 complex at the channel-forming translocon complex that mediates protein translocation across the endoplasmic reticulum (ER). All subunits are required for a maximal enzyme activity. This subunit contains the active site and the acceptor peptide and donor lipid-linked oligosaccharide (LLO) binding pockets. STT3A is present in the majority of OST complexes and mediates cotranslational N-glycosylation of most sites on target proteins, while STT3B-containing complexes are required for efficient post-translational glycosylation and mediate glycosylation of sites that have been skipped by STT3A. STT3A-containing OST-A complex is also required to prevent hyperglycosylation of some target proteins by preventing glycosylation of facultative sites before folding of target proteins is completed. This Canis lupus familiaris (Dog) protein is Dolichyl-diphosphooligosaccharide--protein glycosyltransferase subunit STT3A.